Reading from the N-terminus, the 894-residue chain is Translation initiation factor IF-2 (894 aa).

Residues 25–304 (ADAGMNKASS…KPTSMQHGFD (280 aa)) are disordered. Composition is skewed to basic and acidic residues over residues 33–44 (SSDHVSDEEKQK), 52–62 (EHGDKSGESEP), 101–174 (STIE…KEMN), 184–239 (AKKE…ENSD), and 247–263 (YARE…EGGA). The segment covering 283 to 293 (RGGKGRNKGKL) has biased composition (basic residues). In terms of domain architecture, tr-type G spans 393–562 (PRAPVVTIMG…LLQSEVLELT (170 aa)). Positions 402 to 409 (GHVDHGKT) are G1. A GTP-binding site is contributed by 402–409 (GHVDHGKT). Positions 427–431 (GITQH) are G2. The interval 448-451 (DTPG) is G3. GTP contacts are provided by residues 448–452 (DTPGH) and 502–505 (NKID). The tract at residues 502–505 (NKID) is G4. The tract at residues 538 to 540 (SAK) is G5.

It belongs to the TRAFAC class translation factor GTPase superfamily. Classic translation factor GTPase family. IF-2 subfamily.

It localises to the cytoplasm. In terms of biological role, one of the essential components for the initiation of protein synthesis. Protects formylmethionyl-tRNA from spontaneous hydrolysis and promotes its binding to the 30S ribosomal subunits. Also involved in the hydrolysis of GTP during the formation of the 70S ribosomal complex. This is Translation initiation factor IF-2 from Vibrio campbellii (strain ATCC BAA-1116).